Here is a 402-residue protein sequence, read N- to C-terminus: Tyrosine-protein kinase transforming protein ros (402 aa).

In terms of domain architecture, Protein kinase spans 98 to 377 (LNLHKLLGSG…KLQEIRHSPL (280 aa)). ATP contacts are provided by residues 104–112 (LGSGAFGEV) and Lys133. Asp232 serves as the catalytic Proton acceptor. Tyr268 is subject to Phosphotyrosine; by autocatalysis.

This sequence belongs to the protein kinase superfamily. Tyr protein kinase family. Insulin receptor subfamily.

It catalyses the reaction L-tyrosyl-[protein] + ATP = O-phospho-L-tyrosyl-[protein] + ADP + H(+). This is Tyrosine-protein kinase transforming protein ros (V-ROS) from Galliformes (UR2SV).